A 278-amino-acid chain; its full sequence is Probable endonuclease 4 (278 aa).

Residues histidine 66, histidine 106, glutamate 142, aspartate 176, histidine 179, histidine 213, aspartate 226, histidine 228, and glutamate 258 each contribute to the Zn(2+) site.

The protein belongs to the AP endonuclease 2 family. Zn(2+) serves as cofactor.

It carries out the reaction Endonucleolytic cleavage to 5'-phosphooligonucleotide end-products.. Its function is as follows. Endonuclease IV plays a role in DNA repair. It cleaves phosphodiester bonds at apurinic or apyrimidinic (AP) sites, generating a 3'-hydroxyl group and a 5'-terminal sugar phosphate. The chain is Probable endonuclease 4 from Halothermothrix orenii (strain H 168 / OCM 544 / DSM 9562).